The sequence spans 114 residues: NADH-ubiquinone oxidoreductase chain 3 (114 aa).

3 consecutive transmembrane segments (helical) span residues 3-23, 54-74, and 85-105; these read ATIL…SFWL, FFLI…LLPF, and IVIL…IYEW.

It belongs to the complex I subunit 3 family.

Its subcellular location is the mitochondrion membrane. It carries out the reaction a ubiquinone + NADH + 5 H(+)(in) = a ubiquinol + NAD(+) + 4 H(+)(out). Core subunit of the mitochondrial membrane respiratory chain NADH dehydrogenase (Complex I) that is believed to belong to the minimal assembly required for catalysis. Complex I functions in the transfer of electrons from NADH to the respiratory chain. The immediate electron acceptor for the enzyme is believed to be ubiquinone. This chain is NADH-ubiquinone oxidoreductase chain 3 (mt-nd3), found in Xenopus laevis (African clawed frog).